Here is a 284-residue protein sequence, read N- to C-terminus: Nucleotide-binding protein NMC0691 (284 aa).

8 to 15 (GLSGSGKS) contacts ATP. 58–61 (DVRS) contacts GTP.

It belongs to the RapZ-like family.

Displays ATPase and GTPase activities. The sequence is that of Nucleotide-binding protein NMC0691 from Neisseria meningitidis serogroup C / serotype 2a (strain ATCC 700532 / DSM 15464 / FAM18).